The primary structure comprises 345 residues: Biotin synthase (345 aa).

Residues 66-291 (PEVEVEGIIS…RTMLRFAGGR (226 aa)) enclose the Radical SAM core domain. [4Fe-4S] cluster contacts are provided by cysteine 81, cysteine 85, and cysteine 88. [2Fe-2S] cluster contacts are provided by cysteine 124, cysteine 157, cysteine 216, and arginine 286.

The protein belongs to the radical SAM superfamily. Biotin synthase family. In terms of assembly, homodimer. It depends on [4Fe-4S] cluster as a cofactor. Requires [2Fe-2S] cluster as cofactor.

The enzyme catalyses (4R,5S)-dethiobiotin + (sulfur carrier)-SH + 2 reduced [2Fe-2S]-[ferredoxin] + 2 S-adenosyl-L-methionine = (sulfur carrier)-H + biotin + 2 5'-deoxyadenosine + 2 L-methionine + 2 oxidized [2Fe-2S]-[ferredoxin]. It participates in cofactor biosynthesis; biotin biosynthesis; biotin from 7,8-diaminononanoate: step 2/2. Catalyzes the conversion of dethiobiotin (DTB) to biotin by the insertion of a sulfur atom into dethiobiotin via a radical-based mechanism. This chain is Biotin synthase, found in Mycobacterium avium (strain 104).